The chain runs to 191 residues: Potassium-transporting ATPase KdpC subunit (191 aa).

Residues 6–26 (PAILLFILLTLVTGGLYPLLT) form a helical membrane-spanning segment.

It belongs to the KdpC family. The system is composed of three essential subunits: KdpA, KdpB and KdpC.

It is found in the cell inner membrane. Part of the high-affinity ATP-driven potassium transport (or Kdp) system, which catalyzes the hydrolysis of ATP coupled with the electrogenic transport of potassium into the cytoplasm. This subunit acts as a catalytic chaperone that increases the ATP-binding affinity of the ATP-hydrolyzing subunit KdpB by the formation of a transient KdpB/KdpC/ATP ternary complex. In Enterobacter sp. (strain 638), this protein is Potassium-transporting ATPase KdpC subunit.